The chain runs to 171 residues: Shikimate kinase (171 aa).

An ATP-binding site is contributed by 14 to 19 (GAGKST). Serine 18 is a binding site for Mg(2+). Substrate-binding residues include aspartate 36, arginine 60, and glycine 82. Residue arginine 120 coordinates ATP. Position 139 (arginine 139) interacts with substrate. Glutamine 156 is a binding site for ATP.

The protein belongs to the shikimate kinase family. Monomer. It depends on Mg(2+) as a cofactor.

The protein resides in the cytoplasm. It carries out the reaction shikimate + ATP = 3-phosphoshikimate + ADP + H(+). It functions in the pathway metabolic intermediate biosynthesis; chorismate biosynthesis; chorismate from D-erythrose 4-phosphate and phosphoenolpyruvate: step 5/7. Its function is as follows. Catalyzes the specific phosphorylation of the 3-hydroxyl group of shikimic acid using ATP as a cosubstrate. The chain is Shikimate kinase from Shewanella woodyi (strain ATCC 51908 / MS32).